We begin with the raw amino-acid sequence, 1076 residues long: DNA-directed RNA polymerase subunit beta (1076 aa).

The protein belongs to the RNA polymerase beta chain family. In terms of assembly, in plastids the minimal PEP RNA polymerase catalytic core is composed of four subunits: alpha, beta, beta', and beta''. When a (nuclear-encoded) sigma factor is associated with the core the holoenzyme is formed, which can initiate transcription.

Its subcellular location is the plastid. It is found in the chloroplast. It catalyses the reaction RNA(n) + a ribonucleoside 5'-triphosphate = RNA(n+1) + diphosphate. DNA-dependent RNA polymerase catalyzes the transcription of DNA into RNA using the four ribonucleoside triphosphates as substrates. In Hordeum vulgare (Barley), this protein is DNA-directed RNA polymerase subunit beta.